A 391-amino-acid polypeptide reads, in one-letter code: S-adenosylmethionine synthase (391 aa).

An ATP-binding site is contributed by His-14. Asp-16 contributes to the Mg(2+) binding site. K(+) is bound at residue Glu-42. Residues Glu-55 and Gln-98 each coordinate L-methionine. The segment at 98 to 108 (QSVDIAMGVDE) is flexible loop. Residues 172-174 (DGK), 238-239 (RF), Asp-247, 253-254 (RK), Ala-270, and Lys-274 contribute to the ATP site. Asp-247 serves as a coordination point for L-methionine. Lys-278 lines the L-methionine pocket.

The protein belongs to the AdoMet synthase family. Homotetramer; dimer of dimers. The cofactor is Mg(2+). Requires K(+) as cofactor.

It localises to the cytoplasm. It carries out the reaction L-methionine + ATP + H2O = S-adenosyl-L-methionine + phosphate + diphosphate. It participates in amino-acid biosynthesis; S-adenosyl-L-methionine biosynthesis; S-adenosyl-L-methionine from L-methionine: step 1/1. In terms of biological role, catalyzes the formation of S-adenosylmethionine (AdoMet) from methionine and ATP. The overall synthetic reaction is composed of two sequential steps, AdoMet formation and the subsequent tripolyphosphate hydrolysis which occurs prior to release of AdoMet from the enzyme. The sequence is that of S-adenosylmethionine synthase from Clostridium botulinum (strain Kyoto / Type A2).